Reading from the N-terminus, the 282-residue chain is HTH-type transcriptional activator RhaR (282 aa).

The HTH araC/xylS-type domain maps to 179-277 (DKLITRLAAS…GMTPSQWRHL (99 aa)). DNA-binding regions (H-T-H motif) lie at residues 196 to 217 (DKFC…RQQT) and 244 to 267 (ISDI…TRET).

As to quaternary structure, binds DNA as a dimer.

It is found in the cytoplasm. Functionally, activates expression of the rhaSR operon in response to L-rhamnose. In Escherichia coli (strain K12 / MC4100 / BW2952), this protein is HTH-type transcriptional activator RhaR.